We begin with the raw amino-acid sequence, 165 residues long: Large ribosomal subunit protein uL10 (165 aa).

Belongs to the universal ribosomal protein uL10 family. Part of the ribosomal stalk of the 50S ribosomal subunit. The N-terminus interacts with L11 and the large rRNA to form the base of the stalk. The C-terminus forms an elongated spine to which L12 dimers bind in a sequential fashion forming a multimeric L10(L12)X complex.

In terms of biological role, forms part of the ribosomal stalk, playing a central role in the interaction of the ribosome with GTP-bound translation factors. This is Large ribosomal subunit protein uL10 from Burkholderia multivorans (strain ATCC 17616 / 249).